The chain runs to 486 residues: Probable glycine dehydrogenase (decarboxylating) subunit 2 (486 aa).

Lysine 269 carries the N6-(pyridoxal phosphate)lysine modification.

It belongs to the GcvP family. C-terminal subunit subfamily. In terms of assembly, the glycine cleavage system is composed of four proteins: P, T, L and H. In this organism, the P 'protein' is a heterodimer of two subunits. Requires pyridoxal 5'-phosphate as cofactor.

It carries out the reaction N(6)-[(R)-lipoyl]-L-lysyl-[glycine-cleavage complex H protein] + glycine + H(+) = N(6)-[(R)-S(8)-aminomethyldihydrolipoyl]-L-lysyl-[glycine-cleavage complex H protein] + CO2. In terms of biological role, the glycine cleavage system catalyzes the degradation of glycine. The P protein binds the alpha-amino group of glycine through its pyridoxal phosphate cofactor; CO(2) is released and the remaining methylamine moiety is then transferred to the lipoamide cofactor of the H protein. In Chlorobium phaeobacteroides (strain DSM 266 / SMG 266 / 2430), this protein is Probable glycine dehydrogenase (decarboxylating) subunit 2.